The chain runs to 383 residues: Succinyl-diaminopimelate desuccinylase (383 aa).

His-73 lines the Zn(2+) pocket. Asp-75 is a catalytic residue. Asp-107 contacts Zn(2+). The Proton acceptor role is filled by Glu-141. Zn(2+) is bound by residues Glu-142, Glu-170, and His-356.

The protein belongs to the peptidase M20A family. DapE subfamily. Homodimer. It depends on Zn(2+) as a cofactor. The cofactor is Co(2+).

It catalyses the reaction N-succinyl-(2S,6S)-2,6-diaminopimelate + H2O = (2S,6S)-2,6-diaminopimelate + succinate. It functions in the pathway amino-acid biosynthesis; L-lysine biosynthesis via DAP pathway; LL-2,6-diaminopimelate from (S)-tetrahydrodipicolinate (succinylase route): step 3/3. Its function is as follows. Catalyzes the hydrolysis of N-succinyl-L,L-diaminopimelic acid (SDAP), forming succinate and LL-2,6-diaminopimelate (DAP), an intermediate involved in the bacterial biosynthesis of lysine and meso-diaminopimelic acid, an essential component of bacterial cell walls. In Pseudomonas putida (strain GB-1), this protein is Succinyl-diaminopimelate desuccinylase.